Consider the following 439-residue polypeptide: Ribosomal protein uS12 methylthiotransferase RimO (439 aa).

In terms of domain architecture, MTTase N-terminal spans 7-119 (KQLCLISLGC…IDIMIAKKQN (113 aa)). Positions 16, 50, 82, 151, 155, and 158 each coordinate [4Fe-4S] cluster. Residues 137 to 368 (TGSSVHAYVK…ALKHQNHSFK (232 aa)) form the Radical SAM core domain.

This sequence belongs to the methylthiotransferase family. RimO subfamily. [4Fe-4S] cluster serves as cofactor.

The protein localises to the cytoplasm. It catalyses the reaction L-aspartate(89)-[ribosomal protein uS12]-hydrogen + (sulfur carrier)-SH + AH2 + 2 S-adenosyl-L-methionine = 3-methylsulfanyl-L-aspartate(89)-[ribosomal protein uS12]-hydrogen + (sulfur carrier)-H + 5'-deoxyadenosine + L-methionine + A + S-adenosyl-L-homocysteine + 2 H(+). In terms of biological role, catalyzes the methylthiolation of an aspartic acid residue of ribosomal protein uS12. The sequence is that of Ribosomal protein uS12 methylthiotransferase RimO from Helicobacter pylori (strain P12).